We begin with the raw amino-acid sequence, 487 residues long: Probable cobyric acid synthase (487 aa).

In terms of domain architecture, GATase cobBQ-type spans 246-431 (LVRIAVIRLP…LHGLFMVPAA (186 aa)). The Nucleophile role is filled by C325. The active site involves H423.

This sequence belongs to the CobB/CobQ family. CobQ subfamily.

It participates in cofactor biosynthesis; adenosylcobalamin biosynthesis. In terms of biological role, catalyzes amidations at positions B, D, E, and G on adenosylcobyrinic A,C-diamide. NH(2) groups are provided by glutamine, and one molecule of ATP is hydrogenolyzed for each amidation. This Methanosphaerula palustris (strain ATCC BAA-1556 / DSM 19958 / E1-9c) protein is Probable cobyric acid synthase.